The primary structure comprises 326 residues: MNVMMQKVHGSENDFFLLDETQFERSLTAEEIEQLRIQLCSRETGLLAGADGLLLVGEGTHGTSNARMRVINSDGSEASMCGNGLRTVARYLAEKNQEKSFTVETMFADLKVRQAPNLAEEVATYQVEISPVSFEAVTIPMHLGVQTLIDEIVPALSNTIRFTAVAVPNPHLVAFVDHETLNGPEFERIATYVNNENPYFPEGINVSFVEILGKNQLFVRTYERGVGFTSACGTAMCASSLLYTLLKDGVFYEEITVKNTGGMVKTVVHETSDGSYWMELIGNATITHLIEGSLTDLLNGAFEKITITETNEQKHYQEFLQTLSQK.

Substrate contacts are provided by Asn-13 and Asn-72. Cys-81 (proton donor) is an active-site residue. Substrate-binding positions include 82 to 83 (GN), Asn-169, Asn-205, and 223 to 224 (ER). Cys-232 (proton acceptor) is an active-site residue. 233 to 234 (GT) contacts substrate.

This sequence belongs to the diaminopimelate epimerase family. Homodimer.

It localises to the cytoplasm. It carries out the reaction (2S,6S)-2,6-diaminopimelate = meso-2,6-diaminopimelate. The protein operates within amino-acid biosynthesis; L-lysine biosynthesis via DAP pathway; DL-2,6-diaminopimelate from LL-2,6-diaminopimelate: step 1/1. In terms of biological role, catalyzes the stereoinversion of LL-2,6-diaminopimelate (L,L-DAP) to meso-diaminopimelate (meso-DAP), a precursor of L-lysine and an essential component of the bacterial peptidoglycan. The polypeptide is Diaminopimelate epimerase (Enterococcus faecalis (strain ATCC 700802 / V583)).